The primary structure comprises 963 residues: Collagen alpha-1(I) chain (963 aa).

Residues 1–963 (GPMGPSGPRG…PGPPGPPGPP (963 aa)) form a disordered region. Positions 40–54 (NGDDGEAGKPGRPGE) are enriched in basic and acidic residues. The residue at position 82 (S82) is a Phosphoserine. Low complexity-rich tracts occupy residues 90 to 106 (DAGPAGPKGEPGSPGEN) and 129 to 142 (PAGARGNDGATGAA). The segment covering 144 to 156 (PPGPTGPAGPPGF) has biased composition (pro residues). The segment covering 190–229 (AGAAGPAGNPGADGQPGAKGANGAPGIAGAPGFPGARGPS) has biased composition (low complexity). Over residues 296 to 305 (GERGGPGARG) the composition is skewed to gly residues. Low complexity-rich tracts occupy residues 313 to 337 (AGPKGPAGERGAPGPAGPKGSPGEA), 349 to 375 (KGITGSPGSPGPDGKTGPPGPAGQDGR), 384 to 403 (ARGQAGVMGFPGPKGAAGEP), 482 to 495 (PRGANGAPGNDGAK), 555 to 569 (SGPSGPAGPTGARGA), and 582 to 609 (AGFAGPPGADGQPGAKGEPGDAGAKGDA). S558 carries the phosphoserine modification. Residues 611–623 (PPGPAGPTGPPGP) show a composition bias toward pro residues. 3 stretches are compositionally biased toward low complexity: residues 638 to 654 (SAGPPGATGFPGAAGRV), 683 to 692 (ETGPAGRPGE), and 702 to 726 (AGEKGSPGADGPAGAPGTPGPQGIA). 2 stretches are compositionally biased toward pro residues: residues 767 to 777 (PPGPVGPPGIA) and 813 to 828 (AGPPGAPGAPGAPGPV). Residues 849–863 (IGPVGARGPAGPQGP) are compositionally biased toward low complexity. The span at 864 to 878 (RGDKGETGEQGDRGI) shows a compositional bias: basic and acidic residues. Residues 897–930 (PGEQGPSGASGPAGPRGPPGSAGAPGKDGINGIP) are compositionally biased toward low complexity. Pro residues predominate over residues 948-963 (VGPPGPPGPPGPPGPP).

It belongs to the fibrillar collagen family. In terms of assembly, trimers of one alpha 2(I) and two alpha 1(I) chains. In terms of processing, prolines at the third position of the tripeptide repeating unit (G-X-Y) are hydroxylated in some or all of the chains. In terms of tissue distribution, forms the fibrils of tendon, ligaments and bones. In bones, the fibrils are mineralized with calcium hydroxyapatite.

Its subcellular location is the secreted. The protein localises to the extracellular space. The protein resides in the extracellular matrix. In terms of biological role, type I collagen is a member of group I collagen (fibrillar forming collagen). The chain is Collagen alpha-1(I) chain from Tapirus terrestris (Lowland tapir).